A 156-amino-acid polypeptide reads, in one-letter code: Ribosomal RNA large subunit methyltransferase H (156 aa).

S-adenosyl-L-methionine contacts are provided by residues L73, G104, and 123–128 (LSPLTM).

The protein belongs to the RNA methyltransferase RlmH family. In terms of assembly, homodimer.

It localises to the cytoplasm. The enzyme catalyses pseudouridine(1915) in 23S rRNA + S-adenosyl-L-methionine = N(3)-methylpseudouridine(1915) in 23S rRNA + S-adenosyl-L-homocysteine + H(+). Functionally, specifically methylates the pseudouridine at position 1915 (m3Psi1915) in 23S rRNA. In Proteus mirabilis (strain HI4320), this protein is Ribosomal RNA large subunit methyltransferase H.